The sequence spans 348 residues: NADH-ubiquinone oxidoreductase chain 2 (348 aa).

Helical transmembrane passes span 3–23 (PFIL…TFAS), 24–44 (SHWL…IPLM), 60–80 (FITQ…NAWI), 95–115 (ASML…HFWL), 136–156 (LAPF…ITFL), 177–197 (ILAY…QFNQ), 198–218 (QLAL…FMIF), 239–259 (LTAI…LSGF), 273–293 (DIPL…YFYL), and 325–345 (LAIS…TLAL).

The protein belongs to the complex I subunit 2 family.

It is found in the mitochondrion inner membrane. The enzyme catalyses a ubiquinone + NADH + 5 H(+)(in) = a ubiquinol + NAD(+) + 4 H(+)(out). In terms of biological role, core subunit of the mitochondrial membrane respiratory chain NADH dehydrogenase (Complex I) that is believed to belong to the minimal assembly required for catalysis. Complex I functions in the transfer of electrons from NADH to the respiratory chain. The immediate electron acceptor for the enzyme is believed to be ubiquinone. The chain is NADH-ubiquinone oxidoreductase chain 2 (MT-ND2) from Gadus morhua (Atlantic cod).